The chain runs to 569 residues: Serine/threonine-protein kinase gad8 (569 aa).

A disordered region spans residues 19–63; sequence GLNSGGSSFTRGLKNSTLSSTSSRKSSDEKSRKSSEDKRSPQSTV. Residues 31-42 are compositionally biased toward low complexity; it reads LKNSTLSSTSSR. Over residues 43–58 the composition is skewed to basic and acidic residues; sequence KSSDEKSRKSSEDKRS. Residues 45-202 form the C2 domain; it reads SDEKSRKSSE…IVNKLTDEWV (158 aa). In terms of domain architecture, Protein kinase spans 230 to 485; sequence FELLKVVGKG…AQEIKNHPFF (256 aa). ATP-binding positions include 236-244 and Lys-259; that span reads VGKGSFGKV. The active-site Proton acceptor is the Asp-353. Thr-387 carries the phosphothreonine; by ksg1 modification. The AGC-kinase C-terminal domain maps to 486-557; sequence DDIDWKKLCA…QRPTTIDTSD (72 aa). Ser-527 and Ser-546 each carry phosphoserine; by TORC2.

Belongs to the protein kinase superfamily. AGC Ser/Thr protein kinase family. Phosphorylated by ksg1 and target of rapamycin complex 2 (TORC2), affecting the kinase activity of gad8 in a nutrient-dependent manner.

It catalyses the reaction L-seryl-[protein] + ATP = O-phospho-L-seryl-[protein] + ADP + H(+). It carries out the reaction L-threonyl-[protein] + ATP = O-phospho-L-threonyl-[protein] + ADP + H(+). Functionally, involved in a signaling module for sexual development and cell growth under stressed conditions. Required for G1 arrest under nitrogen starvation and for growth at high temperature and osmolarity. This is Serine/threonine-protein kinase gad8 from Schizosaccharomyces pombe (strain 972 / ATCC 24843) (Fission yeast).